The chain runs to 478 residues: Proline--tRNA ligase (478 aa).

It belongs to the class-II aminoacyl-tRNA synthetase family. ProS type 3 subfamily. In terms of assembly, homodimer.

The protein localises to the cytoplasm. It carries out the reaction tRNA(Pro) + L-proline + ATP = L-prolyl-tRNA(Pro) + AMP + diphosphate. In terms of biological role, catalyzes the attachment of proline to tRNA(Pro) in a two-step reaction: proline is first activated by ATP to form Pro-AMP and then transferred to the acceptor end of tRNA(Pro). This chain is Proline--tRNA ligase, found in Oceanobacillus iheyensis (strain DSM 14371 / CIP 107618 / JCM 11309 / KCTC 3954 / HTE831).